The following is a 276-amino-acid chain: Type II pantothenate kinase (276 aa).

8–15 (DAGGTLTK) provides a ligand contact to ATP. The active-site Proton acceptor is E76. Residues T105, 127 to 131 (GGTIM), F143, and S230 each bind ATP.

The protein belongs to the type II pantothenate kinase family. As to quaternary structure, homodimer.

Its subcellular location is the cytoplasm. The catalysed reaction is (R)-pantothenate + ATP = (R)-4'-phosphopantothenate + ADP + H(+). It participates in cofactor biosynthesis; coenzyme A biosynthesis; CoA from (R)-pantothenate: step 1/5. Catalyzes the phosphorylation of pantothenate (Pan), the first step in CoA biosynthesis. This chain is Type II pantothenate kinase, found in Bacillus cereus (strain AH820).